A 1154-amino-acid chain; its full sequence is MFSGQGSQYVGMGRALYESEPTFRHHVDRFDEVTRDKTGTSLVARLYGRDARAGEPFDDTHVTHPALFAVQYALARTLQARGAQPDIVLGSSLGDFVAAALAQVAPAQEIVAWLIDQAASMARACEPGFMLAVLGPASIYRGSDTLREFSDLVGVNYAEHFVIGGNRADLVRVEAALAREGVVFHRLPVRFGFHSRNVAPVVPWLHAREANLSCRAPTIPWASCTAGGIVEAPTARFLTRIAIDPLRFQEAARAIEQTGSPDTLHWVDLGPSGTLANFARRLGVPNDRLHVVMGPFGDDARALGRVSNLHASNARPAGAPAAPVSEGVSMHAFLFPGQGSQVKGMGAALFARFPDRMRLANEILGYDLAALCIENPDNRLGQTQFTQPAMYVVNALAYLARREDDAGAPAFVAGHSLGEYSALFAAGAFSFEDGLRLVKKRGELMSAARDGGMAAVLGLDEARVAEILALSDLRGIDIANLNAPTQIVIAGPADEIRRAQQWFEQGGCYAYVVLPVSGAFHSRMMRDAQREFERFIAPFDIGAPGIPVIANVTGRPYRGDEVRRGLVEQIASPVRWVDTIRYLSEQGVERFAEIGTGTVLTDLLRKILPQKAGASGAAARPQAGAASAVAASAPPRPTGMADAQPPAASPARAATAASTMPPASASASASAPAPAPAPAPAPAPAPAPAPALAPAFARAPASTSTNGIAPAARVEQLGCPEFKRRFGLKYAYVAGGMVHGIASVRMVVAMAKAGMKGYFGTGGLSLDAIRDAVRAIRGALPAGEPYGMNLLSGRLEEATVDLYLREGVTSVEAAAYMHVTPALARFKLAGLSVDRDGATVSAHKILAKVSRPEVATAFMSPIPEKFLERFVRDGVISDAQARAARAMPVADAVCVEADSGGHTDMGAMPALLPAIRRLCADIAGERGYRDKVPVGVAGGIGTPEAAAAAFVLGADFILTGSINQCTVESGISDVVKDMLQQINVHDTDYAPAGDMFELGAKVQVLRRGVFFPARANRLYELYKQYDSVDDLPDAVRRQLEDKYFGKSLAEVYADCERYYPADEIERARGNPKQKLALIFRWYFGFATRAALAGNEADKVNFQVQCGPALGAFNQWVRNTALENWRNRHVAEMAARILQDAADLLSRRYLSMVGR.

Residues 330 to 714 are acyl transferase; sequence MHAFLFPGQG…TNGIAPAARV (385 aa). Residues 627–689 form a disordered region; the sequence is SAVAASAPPR…PAPAPAPAPA (63 aa). Residues 641–672 are compositionally biased toward low complexity; that stretch reads ADAQPPAASPARAATAASTMPPASASASASAP. Pro residues predominate over residues 673–689; the sequence is APAPAPAPAPAPAPAPA.

This sequence in the N-terminal section; belongs to the FabD family.

Its subcellular location is the cytoplasm. The enzyme catalyses holo-[ACP] + malonyl-CoA = malonyl-[ACP] + CoA. It functions in the pathway antibiotic biosynthesis. Functionally, involved in production of the polyketide antibiotic thailandamide. Probably has an acyl transferase activity and could also have a flavin mononucleotide-dependent oxidoreductase activity. This Burkholderia thailandensis (strain ATCC 700388 / DSM 13276 / CCUG 48851 / CIP 106301 / E264) protein is Polyketide biosynthesis protein ThaF.